Consider the following 284-residue polypeptide: MCPCPYMHQAKPQQWHDAKLDFAESMSYGDYLGLDKVLDAQVPRSQQHNEMLFIIQHQASELWMKLLLHELRHARQLIDQGQLAGSHRVLARVLRIMEQMVSSWAILATLSPMEFISFRSDLGNASGFQSYQYREIEFIFGNKNRAMLLPHQHTPQIAKNLEQCLHTPSLYDAIIQQMTRQDLPICALRLDADPSEPTRSDASVEAAWVQVYRQPERYWDLYQLGEKLMDIEDAFRQWRFRHVTVVERVIGFKKGTGGTEGVEYLRKMLGTVLFPELWSLRSSL.

Substrate contacts are provided by residues 53–57 (FIIQH) and Arg-119. Position 242 (His-242) interacts with heme. Position 256 (Thr-256) interacts with substrate.

This sequence belongs to the tryptophan 2,3-dioxygenase family. Homotetramer. The cofactor is heme.

The enzyme catalyses L-tryptophan + O2 = N-formyl-L-kynurenine. Its pathway is amino-acid degradation; L-tryptophan degradation via kynurenine pathway; L-kynurenine from L-tryptophan: step 1/2. It functions in the pathway siderophore biosynthesis; quinolobactin biosynthesis. In terms of biological role, heme-dependent dioxygenase that catalyzes the oxidative cleavage of the L-tryptophan (L-Trp) pyrrole ring and converts L-tryptophan to N-formyl-L-kynurenine. Catalyzes the oxidative cleavage of the indole moiety. Required for synthesis of the siderophore quinolobactin. The polypeptide is Tryptophan 2,3-dioxygenase (Pseudomonas fluorescens).